We begin with the raw amino-acid sequence, 382 residues long: Pyrimidine monooxygenase RutA (382 aa).

Residues 68-69 (IK), Asn-134, Glu-143, 159-160 (RY), and Ser-209 each bind FMN.

This sequence belongs to the NtaA/SnaA/DszA monooxygenase family. RutA subfamily.

The catalysed reaction is uracil + FMNH2 + NADH + O2 = (Z)-3-ureidoacrylate + FMN + NAD(+) + H2O + H(+). It carries out the reaction thymine + FMNH2 + NADH + O2 = (Z)-2-methylureidoacrylate + FMN + NAD(+) + H2O + H(+). Catalyzes the pyrimidine ring opening between N-3 and C-4 by an unusual flavin hydroperoxide-catalyzed mechanism, adding oxygen atoms in the process to yield ureidoacrylate peracid, that immediately reacts with FMN forming ureidoacrylate and FMN-N(5)-oxide. The FMN-N(5)-oxide reacts spontaneously with NADH to produce FMN. Requires the flavin reductase RutF to regenerate FMN in vivo. The polypeptide is Pyrimidine monooxygenase RutA (Escherichia coli (strain SE11)).